The following is a 372-amino-acid chain: Pre-small/secreted glycoprotein (372 aa).

An N-terminal signal peptide occupies residues 1–32; the sequence is MEGLSLLQLPRDKFRKSSFFVWVIILFQKAFS. N-linked (GlcNAc...) asparagine; by host glycosylation occurs at Asn40. 2 disulfide bridges follow: Cys108–Cys135 and Cys121–Cys147. N-linked (GlcNAc...) asparagine; by host glycans are attached at residues Asn204, Asn208, Asn238, Asn257, and Asn268. The segment at 320 to 340 is disordered; it reads MRHRRELQREESPTGPPGSIR.

This sequence belongs to the filoviruses glycoprotein family. In terms of assembly, homodimer; disulfide-linked. The homodimers are linked by two disulfide bonds in a parallel orientation. Monomer. In terms of processing, this precursor is processed into mature sGP and delta-peptide by host furin or furin-like proteases. The cleavage site corresponds to the furin optimal cleavage sequence [KR]-X-[KR]-R. N-glycosylated. Post-translationally, O-glycosylated.

It is found in the secreted. Seems to possess an anti-inflammatory activity as it can reverse the barrier-decreasing effects of TNF alpha. Might therefore contribute to the lack of inflammatory reaction seen during infection in spite the of extensive necrosis and massive virus production. Does not seem to be involved in activation of primary macrophages. Does not seem to interact specifically with neutrophils. In terms of biological role, viroporin that permeabilizes mammalian cell plasma membranes. It acts by altering permeation of ionic compounds and small molecules. This activity may lead to viral enterotoxic activity. The polypeptide is Pre-small/secreted glycoprotein (GP) (Sudan ebolavirus (strain Boniface-76) (SEBOV)).